We begin with the raw amino-acid sequence, 298 residues long: Lipoyl synthase 1 (298 aa).

The [4Fe-4S] cluster site is built by C34, C39, C45, C60, C64, C67, and S274. In terms of domain architecture, Radical SAM core spans 46-263 (FKAGTATFLI…RRAGEGMGFL (218 aa)). The segment at 277-298 (AEQVQRLMRSHPRTPKNQHSPE) is disordered.

This sequence belongs to the radical SAM superfamily. Lipoyl synthase family. [4Fe-4S] cluster serves as cofactor.

The protein localises to the cytoplasm. It catalyses the reaction [[Fe-S] cluster scaffold protein carrying a second [4Fe-4S](2+) cluster] + N(6)-octanoyl-L-lysyl-[protein] + 2 oxidized [2Fe-2S]-[ferredoxin] + 2 S-adenosyl-L-methionine + 4 H(+) = [[Fe-S] cluster scaffold protein] + N(6)-[(R)-dihydrolipoyl]-L-lysyl-[protein] + 4 Fe(3+) + 2 hydrogen sulfide + 2 5'-deoxyadenosine + 2 L-methionine + 2 reduced [2Fe-2S]-[ferredoxin]. The protein operates within protein modification; protein lipoylation via endogenous pathway; protein N(6)-(lipoyl)lysine from octanoyl-[acyl-carrier-protein]: step 2/2. Its function is as follows. Catalyzes the radical-mediated insertion of two sulfur atoms into the C-6 and C-8 positions of the octanoyl moiety bound to the lipoyl domains of lipoate-dependent enzymes, thereby converting the octanoylated domains into lipoylated derivatives. This Gloeobacter violaceus (strain ATCC 29082 / PCC 7421) protein is Lipoyl synthase 1.